Reading from the N-terminus, the 153-residue chain is Type II secretion system core protein G (153 aa).

The propeptide at 1–7 (MERRQRG) is leader sequence. Residue Phe8 is modified to N-methylphenylalanine. Residues 8 to 28 (FTLLEIMVVIVILGVLASLVV) traverse the membrane as a helical segment. Disordered stretches follow at residues 68 to 91 (EQGL…PQDG) and 126 to 153 (MPDT…NGNP). Residues 134-143 (GNWNVGNGAH) are compositionally biased toward low complexity. Residues 144–153 (NNGGNGNGNP) show a composition bias toward gly residues.

It belongs to the GSP G family. As to quaternary structure, type II secretion system is composed of four main components: the outer membrane complex, the inner membrane complex, the cytoplasmic secretion ATPase and the periplasm-spanning pseudopilus. Forms homomultimers. Cleaved by the prepilin peptidase. In terms of processing, methylated by prepilin peptidase at the amino group of the N-terminal phenylalanine once the leader sequence is cleaved.

It localises to the cell inner membrane. Core component of the type II secretion system required for the energy-dependent secretion of extracellular factors such as proteases and toxins from the periplasm. Pseudopilin (pilin-like) protein that polymerizes to form the pseudopilus. Further polymerization triggers pseudopilus growth. The sequence is that of Type II secretion system core protein G (outG) from Dickeya chrysanthemi (Pectobacterium chrysanthemi).